Here is a 239-residue protein sequence, read N- to C-terminus: Pyridoxine 5'-phosphate synthase (239 aa).

Residue Asn7 participates in 3-amino-2-oxopropyl phosphate binding. 9 to 10 (DH) contributes to the 1-deoxy-D-xylulose 5-phosphate binding site. Arg18 lines the 3-amino-2-oxopropyl phosphate pocket. His43 serves as the catalytic Proton acceptor. 1-deoxy-D-xylulose 5-phosphate is bound by residues Arg45 and His50. Glu70 (proton acceptor) is an active-site residue. 1-deoxy-D-xylulose 5-phosphate is bound at residue Thr100. His191 acts as the Proton donor in catalysis. 3-amino-2-oxopropyl phosphate is bound by residues Gly192 and 213-214 (GH).

It belongs to the PNP synthase family. As to quaternary structure, homooctamer; tetramer of dimers.

The protein localises to the cytoplasm. It catalyses the reaction 3-amino-2-oxopropyl phosphate + 1-deoxy-D-xylulose 5-phosphate = pyridoxine 5'-phosphate + phosphate + 2 H2O + H(+). Its pathway is cofactor biosynthesis; pyridoxine 5'-phosphate biosynthesis; pyridoxine 5'-phosphate from D-erythrose 4-phosphate: step 5/5. Its function is as follows. Catalyzes the complicated ring closure reaction between the two acyclic compounds 1-deoxy-D-xylulose-5-phosphate (DXP) and 3-amino-2-oxopropyl phosphate (1-amino-acetone-3-phosphate or AAP) to form pyridoxine 5'-phosphate (PNP) and inorganic phosphate. This is Pyridoxine 5'-phosphate synthase from Pelobacter propionicus (strain DSM 2379 / NBRC 103807 / OttBd1).